A 434-amino-acid chain; its full sequence is Double-stranded RNA-binding protein 2 (434 aa).

DRBM domains follow at residues 1-70 and 87-155; these read MYKN…ALSN and VYKN…SLKQ. The tract at residues 402-434 is disordered; sequence EKTASKETERAEFKDSSKGEPETARERLENLKI.

As to quaternary structure, heterodimer with DRB1 or DRB5. Interacts with DCL1 and DCL5.

Its subcellular location is the cytoplasm. Binds double-stranded RNA. May be involved in RNA-mediated silencing. The protein is Double-stranded RNA-binding protein 2 (DRB2) of Arabidopsis thaliana (Mouse-ear cress).